The chain runs to 216 residues: MSLPMLQVALDNQTMDSAYETTRLIAEEVDIIEVGTILCVGEGVRAVRDLKALYPHKIVLADAKIADAGKILSRMCFEANADWVTVICCADINTAKGALDVAKEFNGDVQIELTGYWTWEQAQQWRDAGIGQVVYHRSRDAQAAGVAWGEADITAIKRLSDMGFKVTVTGGLALEDLPLFKGIPIHVFIAGRSIRDAASPVEAARQFKRSIAELWG.

A substrate-binding site is contributed by aspartate 11. Mg(2+) is bound by residues glutamate 33 and aspartate 62. Arginine 192 provides a ligand contact to substrate.

The protein belongs to the HPS/KGPDC family. KGPDC subfamily. In terms of assembly, homodimer. It depends on Mg(2+) as a cofactor.

It carries out the reaction 3-dehydro-L-gulonate 6-phosphate + H(+) = L-xylulose 5-phosphate + CO2. It functions in the pathway cofactor degradation; L-ascorbate degradation; D-xylulose 5-phosphate from L-ascorbate: step 2/4. In terms of biological role, catalyzes the decarboxylation of 3-keto-L-gulonate-6-P into L-xylulose-5-P. Is involved in the anaerobic L-ascorbate utilization. The chain is 3-keto-L-gulonate-6-phosphate decarboxylase UlaD from Escherichia coli O127:H6 (strain E2348/69 / EPEC).